The primary structure comprises 59 residues: uncharacterized protein (59 aa).

A helical membrane pass occupies residues 6–26 (WWLVVFAVFVFLFDTLLMQWI).

It localises to the membrane. This is an uncharacterized protein from Escherichia coli O157:H7.